Consider the following 277-residue polypeptide: MDYIIELIKYIILGIIQGVTEIFPVSSSGHLVLFSNLFLGGEDINATLTLFLMITNMGSFLALLIYYFKDVKELVVDSFNFVFNKEKRKEIIVQENISYAVKLIIAIVPIGIAGLLIKDYLPTNLLSIGISLIITSLLLFLVFLLRNKKFSNDITFKNAGVIGLIQMFAVFPGISRSGITLVGGLSQKIEIKKVMRFSFLCYLLISIPVSGLGLYDAIKNPGTMSDIPGFSLAFIFSFIFSLLTIKIMHKYVTVKNLIWFSLYALTVGLVSITLYII.

7 helical membrane passes run 3–23 (YIIELIKYIILGIIQGVTEIF), 48–68 (LTLFLMITNMGSFLALLIYYF), 97–117 (ISYAVKLIIAIVPIGIAGLLI), 125–145 (LLSIGISLIITSLLLFLVFLL), 198–218 (SFLCYLLISIPVSGLGLYDAI), 227–247 (IPGFSLAFIFSFIFSLLTIKI), and 257–277 (LIWFSLYALTVGLVSITLYII).

The protein belongs to the UppP family.

It is found in the cell membrane. The catalysed reaction is di-trans,octa-cis-undecaprenyl diphosphate + H2O = di-trans,octa-cis-undecaprenyl phosphate + phosphate + H(+). Functionally, catalyzes the dephosphorylation of undecaprenyl diphosphate (UPP). Confers resistance to bacitracin. This is Undecaprenyl-diphosphatase from Acholeplasma laidlawii (strain PG-8A).